The primary structure comprises 172 residues: Male-specific submandibular salivary gland protein (172 aa).

A signal peptide spans Met1–Cys15. Asn41 carries N-linked (GlcNAc...) asparagine glycosylation. 2 disulfides stabilise this stretch: Cys60–Cys64 and Cys79–Cys170.

This sequence belongs to the calycin superfamily. Lipocalin family. In terms of processing, N-glycosylated. In terms of tissue distribution, expressed in acinar cells of the submandibular salivary gland from where it is secreted into saliva (at protein level). Also released from the submandibular salivary gland into blood and excreted in urine (at protein level). Expressed in the lacrimal gland from where it is secreted into tears (at protein level).

It localises to the secreted. The protein resides in the cytoplasm. This chain is Male-specific submandibular salivary gland protein, found in Mesocricetus auratus (Golden hamster).